The chain runs to 287 residues: Immunoglobulin alpha Fc receptor (287 aa).

A signal peptide spans 1–21 (MDPKQTTLLCLVLCLGQRIQA). Topologically, residues 22–227 (QEGDFPMPFI…SIHQDYTTQN (206 aa)) are extracellular. Ig-like C2-type domains are found at residues 42–107 (DGSV…IGHY) and 139–200 (GENI…YNRS). The cysteines at positions 49 and 100 are disulfide-linked. N-linked (GlcNAc...) asparagine glycans are attached at residues Asn65, Asn79, Asn141, Asn177, and Asn186. Cys146 and Cys193 form a disulfide bridge. The chain crosses the membrane as a helical span at residues 228–246 (LIRMAVAGLVLVALLAILV). Topologically, residues 247-287 (ENWHSHTALNKEASADVAEPSWSQQMCQPGLTFARTPSVCK) are cytoplasmic.

Associates with the Fc epsilon RI gamma 2 receptor inducing tyrosine phosphorylation of gamma 2. In terms of assembly, (Microbial infection) Interacts with Staphylococcus aureus protein SSL11. As to expression, isoform A.1, isoform A.2 and isoform A.3 are differentially expressed between blood and mucosal myeloid cells. Isoform A.1, isoform A.2 and isoform A.3 are expressed in monocytes. Isoform A.1 and isoform A.2 are expressed in alveolar macrophages; however only one isoform is expressed at alveolar macrophages surfaces.

It is found in the cell membrane. Its subcellular location is the secreted. Its function is as follows. Binds to the Fc region of immunoglobulins alpha. Mediates several functions including cytokine production. This chain is Immunoglobulin alpha Fc receptor (FCAR), found in Homo sapiens (Human).